A 165-amino-acid chain; its full sequence is Ubiquitin-conjugating enzyme E2 G2 (165 aa).

Ala-2 bears the N-acetylalanine mark. The UBC core domain occupies 4-164 (TALKRLMAEY…AKQIVQKSLG (161 aa)). The active-site Glycyl thioester intermediate is the Cys-89.

The protein belongs to the ubiquitin-conjugating enzyme family. As to quaternary structure, interacts with AUP1 (via C-terminus); the interaction recruits UBE2G2 to lipid droplets. Interacts with ubiquitin ligases AMFR/gp78 and RNF139/TRC8; recruitment to lipid droplets by AUP1 facilitates interaction of UBE2G2 with AMFR and RNF139, leading to sterol-induced ubiquitination of 3-hydroxy-3-methylglutaryl coenzyme A reductase and its subsequent proteasomal degradation.

It is found in the endoplasmic reticulum. The protein localises to the lipid droplet. The enzyme catalyses S-ubiquitinyl-[E1 ubiquitin-activating enzyme]-L-cysteine + [E2 ubiquitin-conjugating enzyme]-L-cysteine = [E1 ubiquitin-activating enzyme]-L-cysteine + S-ubiquitinyl-[E2 ubiquitin-conjugating enzyme]-L-cysteine.. It functions in the pathway protein modification; protein ubiquitination. In terms of biological role, accepts ubiquitin from the E1 complex and catalyzes its covalent attachment to other proteins. In vitro catalyzes 'Lys-48'-linked polyubiquitination. Involved in endoplasmic reticulum-associated degradation (ERAD). Required for sterol-induced ubiquitination of 3-hydroxy-3-methylglutaryl coenzyme A reductase and its subsequent proteasomal degradation. This is Ubiquitin-conjugating enzyme E2 G2 from Homo sapiens (Human).